A 237-amino-acid polypeptide reads, in one-letter code: Ribonuclease PH (237 aa).

Residues arginine 86 and 124–126 contribute to the phosphate site; that span reads GTR.

It belongs to the RNase PH family. Homohexameric ring arranged as a trimer of dimers.

It carries out the reaction tRNA(n+1) + phosphate = tRNA(n) + a ribonucleoside 5'-diphosphate. In terms of biological role, phosphorolytic 3'-5' exoribonuclease that plays an important role in tRNA 3'-end maturation. Removes nucleotide residues following the 3'-CCA terminus of tRNAs; can also add nucleotides to the ends of RNA molecules by using nucleoside diphosphates as substrates, but this may not be physiologically important. Probably plays a role in initiation of 16S rRNA degradation (leading to ribosome degradation) during starvation. This is Ribonuclease PH from Pseudoalteromonas translucida (strain TAC 125).